Reading from the N-terminus, the 121-residue chain is Holin-like protein CidA (121 aa).

Helical transmembrane passes span W3–I23, P30–V50, G58–I78, and I89–L109.

This sequence belongs to the CidA/LrgA family. CidA subfamily.

It localises to the cell membrane. In terms of biological role, increases the activity of extracellular murein hydrolases possibly by mediating their export via hole formation. Inhibited by the antiholin-like proteins LrgAB. In an unstressed cell, the LrgAB products probably inhibit the function of the CidA protein. When a cell is stressed by the addition of antibiotics or by other factors in the environment, CidA possibly oligomerizes within the bacterial cell membrane, creating lesions that disrupt the proton motive force, which in turn results in loss of cell viability. These lesions are also hypothesized to regulate the subsequent cell lysis by either allowing the murein hydrolases access to the cell wall substrate and/or regulating their activity by a possible change in the cell wall pH that results from loss of membrane potential. The protein is Holin-like protein CidA of Bacillus cereus (strain ATCC 10987 / NRS 248).